Consider the following 302-residue polypeptide: Deoxyhypusine hydroxylase-B (302 aa).

HEAT-like PBS-type repeat units lie at residues 49 to 75 (LAHE…VLKD), 82 to 108 (VRHE…SLAV), 171 to 200 (MYER…LGVK), 204 to 230 (LRHE…VLKN), and 237 to 263 (VRHE…FAKD). Residues His51, Glu52, His84, and Glu85 each coordinate Fe cation. Fe cation is bound by residues His206, Glu207, His239, and Glu240.

It belongs to the deoxyhypusine hydroxylase family. Fe(2+) is required as a cofactor.

It catalyses the reaction [eIF5A protein]-deoxyhypusine + AH2 + O2 = [eIF5A protein]-hypusine + A + H2O. It functions in the pathway protein modification; eIF5A hypusination. Its function is as follows. Catalyzes the hydroxylation of the N(6)-(4-aminobutyl)-L-lysine intermediate to form hypusine, an essential post-translational modification only found in mature eIF-5A factor. The polypeptide is Deoxyhypusine hydroxylase-B (Oryza sativa subsp. japonica (Rice)).